The primary structure comprises 348 residues: MSGEKSSLLLIHPAVTTTPELVESVKKSNVFADSSKLDQFLVNKLNDSSVQLEDEKYSLVYYLTPEKESEIQFPTKLIAVLAQSLRGGGRLFGLSDVYKIDALINGFEVVNSGEQGYHWVKKGTAHTQTAPVALRPKRNTPSGGSKSLPIFAKPSFALPAFKKAEKPKPTGLPTFKKPESPRASVVAEDLDDGDELDGMNEDDSNSDELTASKSKFFDDVAGQDSADSIDEDDLVDDAEKSAITVVTCGKTKTRRRKACKDCTCGLKEAEAQEADAARAAQDRILGKPVKFDEQELTEIDFTIQGKKVGGCGSCSLGDAFRCSGCPYLGLPAFKPGQPISLDTIADDL.

Residues 1 to 185 (MSGEKSSLLL…KKPESPRASV (185 aa)) are N-terminal SAM-like domain. 2 disordered regions span residues 128-148 (QTAPVALRPKRNTPSGGSKSL) and 162-213 (KKAE…TASK). A linker region spans residues 186–241 (VAEDLDDGDELDGMNEDDSNSDELTASKSKFFDDVAGQDSADSIDEDDLVDDAEKS). The segment covering 188-206 (EDLDDGDELDGMNEDDSNS) has biased composition (acidic residues). Residues Cys-248, Cys-259, Cys-262, and Cys-264 each coordinate [2Fe-2S] cluster. A fe-S binding site A region spans residues 248–264 (CGKTKTRRRKACKDCTC). Positions 311, 314, 322, and 325 each coordinate [4Fe-4S] cluster. Short sequence motifs (cx2C motif) lie at residues 311 to 314 (CGSC) and 322 to 325 (CSGC). Positions 311–325 (CGSCSLGDAFRCSGC) are fe-S binding site B.

The protein belongs to the anamorsin family. Monomer. Interacts with TAH18. Interacts with MIA40. The cofactor is [2Fe-2S] cluster. [4Fe-4S] cluster is required as a cofactor.

The protein localises to the cytoplasm. Its subcellular location is the mitochondrion intermembrane space. Its function is as follows. Component of the cytosolic iron-sulfur (Fe-S) protein assembly (CIA) machinery required for the maturation of extramitochondrial Fe-S proteins. Part of an electron transfer chain functioning in an early step of cytosolic Fe-S biogenesis, facilitating the de novo assembly of a [4Fe-4S] cluster on the scaffold complex CFD1-NBP35. Electrons are transferred to DRE2 from NADPH via the FAD- and FMN-containing protein TAH18. TAH18-DRE2 are also required for the assembly of the diferric tyrosyl radical cofactor of ribonucleotide reductase (RNR), probably by providing electrons for reduction during radical cofactor maturation in the catalytic small subunit RNR2. This is Fe-S cluster assembly protein DRE2 from Lachancea thermotolerans (strain ATCC 56472 / CBS 6340 / NRRL Y-8284) (Yeast).